The following is a 63-amino-acid chain: Putative transmembrane protein ORF63 (63 aa).

At Met1–Leu8 the chain is on the extracellular side. The chain crosses the membrane as a helical span at residues Glu9–Val29. Residues Asn30 to Pro31 lie on the Cytoplasmic side of the membrane. The chain crosses the membrane as a helical span at residues Ser32 to Phe52. Over His53–Gly63 the chain is Extracellular.

The protein localises to the host membrane. The sequence is that of Putative transmembrane protein ORF63 from Acidianus filamentous virus 1 (isolate United States/Yellowstone) (AFV-1).